The following is an 82-amino-acid chain: Small ribosomal subunit protein bS16 (82 aa).

The protein belongs to the bacterial ribosomal protein bS16 family.

This chain is Small ribosomal subunit protein bS16, found in Vibrio parahaemolyticus serotype O3:K6 (strain RIMD 2210633).